The chain runs to 391 residues: Superoxide dismutase [Fe] 1, chloroplastic (391 aa).

The N-terminal 73 residues, 1-73 (MAFATLVGVG…GESTNSRVLQ (73 aa)), are a transit peptide targeting the chloroplast. Positions 87-119 (VNDGIDDETASDAEMDEDAEANGDESSGTDEDA) are enriched in acidic residues. The disordered stretch occupies residues 87-120 (VNDGIDDETASDAEMDEDAEANGDESSGTDEDAS). The Fe cation site is built by His148, His202, Asp301, and His305. The disordered stretch occupies residues 370–391 (MPQQVNGDAREQTSGQEKSLGV). Residues 381-391 (QTSGQEKSLGV) are compositionally biased toward polar residues.

Belongs to the iron/manganese superoxide dismutase family. As to quaternary structure, homodimer. The cofactor is Fe cation.

It localises to the plastid. It is found in the chloroplast. It catalyses the reaction 2 superoxide + 2 H(+) = H2O2 + O2. Its function is as follows. Destroys superoxide anion radicals which are normally produced within the cells and which are toxic to biological systems. This Oryza sativa subsp. japonica (Rice) protein is Superoxide dismutase [Fe] 1, chloroplastic.